The chain runs to 311 residues: Olfactory receptor 14I1 (311 aa).

Topologically, residues 1 to 26 are extracellular; that stretch reads MDNLTKVTEFLLMEFSGIWELQVLHA. An N-linked (GlcNAc...) asparagine glycan is attached at asparagine 3. The chain crosses the membrane as a helical span at residues 27-47; the sequence is GLFLLIYLAVLVGNLLIIAVI. Residues 48–55 lie on the Cytoplasmic side of the membrane; it reads TLDQHLHT. A helical membrane pass occupies residues 56-76; sequence PMYFFLKNLSVLDLCYISVTV. The Extracellular portion of the chain corresponds to 77 to 92; sequence PKSIRNSLTRRSSISY. The helical transmembrane segment at 93–113 threads the bilayer; the sequence is LGCVAQVYFFSAFASAELAFL. Residues cysteine 95 and cysteine 188 are joined by a disulfide bond. The Cytoplasmic portion of the chain corresponds to 114-141; that stretch reads TVMSYDRYVAICHPLQYRAVMTSGGCYQ. A helical membrane pass occupies residues 142–162; it reads MAVTTWLSCFSYAAVHTGNMF. At 163–189 the chain is on the extracellular side; that stretch reads REHVCRSSVIHQFFRDIPHVLALVSCE. A helical membrane pass occupies residues 190-210; that stretch reads VFFVEFLTLALSSCLVLGCFI. Residues 211–241 are Cytoplasmic-facing; the sequence is LMMISYFQIFSTVLRIPSGQSRAKAFSTCSP. The helical transmembrane segment at 242–262 threads the bilayer; that stretch reads QLIVIMLFLTTGLFAALGPIA. Over 263 to 269 the chain is Extracellular; it reads KALSIQD. The chain crosses the membrane as a helical span at residues 270–290; it reads LVIALTYTVLPPFLNPIIYSL. Residues 291-311 lie on the Cytoplasmic side of the membrane; it reads RNKEIKTAMWRLFVKIYFLQK.

Belongs to the G-protein coupled receptor 1 family.

It localises to the cell membrane. Its function is as follows. Odorant receptor. The chain is Olfactory receptor 14I1 (OR14I1) from Homo sapiens (Human).